The primary structure comprises 585 residues: L-gulonolactone oxidase 3 (585 aa).

The signal sequence occupies residues 1–24 (MRYSHTLQQFSILSFFVTIWTVQS). The FAD-binding PCMH-type domain occupies 51–233 (KTCHAANVTY…SKVKLSIEKA (183 aa)).

The protein belongs to the oxygen-dependent FAD-linked oxidoreductase family. FAD is required as a cofactor.

The protein resides in the vacuole. It carries out the reaction L-gulono-1,4-lactone + O2 = L-ascorbate + H2O2 + H(+). It functions in the pathway cofactor biosynthesis; L-ascorbate biosynthesis. In terms of biological role, catalyzes the oxidation of L-gulono-1,4-lactone to ascorbic acid. L-gulono-1,4-lactone is oxidized to hydrogen peroxide and L-xylo-hexulonolactone which spontaneously isomerizes to L-ascorbate. The sequence is that of L-gulonolactone oxidase 3 from Arabidopsis thaliana (Mouse-ear cress).